The primary structure comprises 101 residues: NADH-ubiquinone oxidoreductase chain 4L (101 aa).

3 helical membrane passes run 5-25, 29-49, and 64-84; these read LNCT…IFLN, ILVM…NLIF, and LLIL…LVIY.

The protein belongs to the complex I subunit 4L family.

The protein resides in the mitochondrion membrane. It carries out the reaction a ubiquinone + NADH + 5 H(+)(in) = a ubiquinol + NAD(+) + 4 H(+)(out). In terms of biological role, core subunit of the mitochondrial membrane respiratory chain NADH dehydrogenase (Complex I) that is believed to belong to the minimal assembly required for catalysis. Complex I functions in the transfer of electrons from NADH to the respiratory chain. The immediate electron acceptor for the enzyme is believed to be ubiquinone. This is NADH-ubiquinone oxidoreductase chain 4L (ND4L) from Chondrus crispus (Carrageen Irish moss).